The following is a 289-amino-acid chain: Trimeric intracellular cation channel type B (289 aa).

The Lumenal segment spans residues 1–18 (MDVFAFFNLNELAFGLSK). A helical membrane pass occupies residues 19-36 (LPMFPYFDMAHYIISVMS). Over 37-49 (LREQPGALCVSQR) the chain is Cytoplasmic. The helical transmembrane segment at 50-73 (SPLACWFSSMLYCFGGAVLSALML) threads the bilayer. At 74-85 (ADAPVAPLSNTT) the chain is on the lumenal side. A helical membrane pass occupies residues 86–103 (NLLLATLMWYLVFYCPLD). Residues 104–107 (VVYS) are Cytoplasmic-facing. The chain crosses the membrane as a helical span at residues 108–125 (LASLLPLRLVLTAMKEVT). The a 1,2-diacyl-sn-glycero-3-phospho-(1D-myo-inositol-4,5-bisphosphate) site is built by lysine 122 and arginine 126. At 126–144 (RTWKVLSGVSQAGSKYSDA) the chain is on the lumenal side. The chain crosses the membrane as a helical span at residues 145–162 (LFVMVAVGWAKGAGGGLI). The Cytoplasmic segment spans residues 163–183 (SNFEQLVRGVWKPETNELLKM). The chain crosses the membrane as a helical span at residues 184–201 (SYPTKVTLLGAVVFSLQQ). Over 202 to 210 (CRYLPIQTH) the chain is Lumenal. Residues 211 to 230 (HLTFIYTLFTVTNKTRMMLL) traverse the membrane as a helical segment. The Cytoplasmic segment spans residues 231-289 (GSSSHPLSSLESFLYKTLFVRPLTDLSAEHTHSKHNGSVPEPTTAQTHTKEAEASKKTN). Residues 260–289 (HTHSKHNGSVPEPTTAQTHTKEAEASKKTN) form a disordered region. The span at 278-289 (HTKEAEASKKTN) shows a compositional bias: basic and acidic residues.

It belongs to the TMEM38 family. In terms of assembly, homotrimer; conformation seems to be controled by binding to diacylglycerol (DAG).

Its subcellular location is the endoplasmic reticulum membrane. The enzyme catalyses K(+)(in) = K(+)(out). With respect to regulation, channel activity is activated by increased cytosolic Ca(2+) levels and blocked by luminal high Ca(2+) levels. Intracellular monovalent cation channel required for maintenance of rapid intracellular calcium release. Acts as a potassium counter-ion channel that functions in synchronization with calcium release from intracellular stores. Activated by increased cytosolic Ca(2+) levels. The chain is Trimeric intracellular cation channel type B (tmem38b) from Danio rerio (Zebrafish).